A 344-amino-acid chain; its full sequence is GTPase Obg (344 aa).

The span at 1–12 (MFVDSASFSVSS) shows a compositional bias: polar residues. A disordered region spans residues 1–36 (MFVDSASFSVSSGKGGPGCASFRREKHVPLGGPDGG). The Obg domain maps to 1 to 158 (MFVDSASFSV…RNIRLELKLI (158 aa)). Positions 159-341 (ADVGLVGFPN…LKFGLLEILK (183 aa)) constitute an OBG-type G domain. Residues 165–172 (GFPNVGKS), 190–194 (FTTLT), 212–215 (DIPG), 280–283 (TRLD), and 322–324 (SSV) each bind GTP. Mg(2+) is bound by residues S172 and T192.

The protein belongs to the TRAFAC class OBG-HflX-like GTPase superfamily. OBG GTPase family. Monomer. Mg(2+) is required as a cofactor.

The protein localises to the cytoplasm. In terms of biological role, an essential GTPase which binds GTP, GDP and possibly (p)ppGpp with moderate affinity, with high nucleotide exchange rates and a fairly low GTP hydrolysis rate. Plays a role in control of the cell cycle, stress response, ribosome biogenesis and in those bacteria that undergo differentiation, in morphogenesis control. The polypeptide is GTPase Obg (Campylobacter fetus subsp. fetus (strain 82-40)).